The chain runs to 132 residues: MGNDTIANMITSIRNANLGKIKTVQVPATNITRNIAKILFQEGFIDNFIDNKQNTKDILILNLKYQGKKKKSYITTLRRISKPGLRIYSNHKEIPKVLGGMGIVILSTSRGIMTDREARQKKIGGELLCYVW.

This sequence belongs to the universal ribosomal protein uS8 family. As to quaternary structure, part of the 30S ribosomal subunit.

It localises to the plastid. The protein resides in the chloroplast. Its function is as follows. One of the primary rRNA binding proteins, it binds directly to 16S rRNA central domain where it helps coordinate assembly of the platform of the 30S subunit. This Marchantia polymorpha (Common liverwort) protein is Small ribosomal subunit protein uS8c (rps8).